The primary structure comprises 327 residues: Sphingomyelin synthase-related 2 (327 aa).

5 consecutive transmembrane segments (helical) span residues 54–74 (LLAT…LAWV), 99–119 (AIRI…LVMF), 131–151 (VFFC…IFQV), 192–212 (LCGD…FLVF), and 220–240 (LQPL…SILL). The active site involves histidine 201. Over 241 to 327 (ARKHYMIDIV…TLKKSRRSFE (87 aa)) the chain is Cytoplasmic. Residues histidine 244 and aspartate 248 contribute to the active site.

It belongs to the sphingomyelin synthase family.

Its subcellular location is the membrane. This chain is Sphingomyelin synthase-related 2, found in Caenorhabditis elegans.